The sequence spans 449 residues: UDP-N-acetylglucosamine 1-carboxyvinyltransferase (449 aa).

Residue 51–52 coordinates phosphoenolpyruvate; that stretch reads KN. Position 121 (R121) interacts with UDP-N-acetyl-alpha-D-glucosamine. The Proton donor role is filled by C145. The residue at position 145 (C145) is a 2-(S-cysteinyl)pyruvic acid O-phosphothioketal. UDP-N-acetyl-alpha-D-glucosamine-binding positions include 150 to 154, D333, and I355; that span reads RPVDQ.

Belongs to the EPSP synthase family. MurA subfamily.

The protein resides in the cytoplasm. The enzyme catalyses phosphoenolpyruvate + UDP-N-acetyl-alpha-D-glucosamine = UDP-N-acetyl-3-O-(1-carboxyvinyl)-alpha-D-glucosamine + phosphate. It participates in cell wall biogenesis; peptidoglycan biosynthesis. In terms of biological role, cell wall formation. Adds enolpyruvyl to UDP-N-acetylglucosamine. This is UDP-N-acetylglucosamine 1-carboxyvinyltransferase from Burkholderia mallei (strain ATCC 23344).